The sequence spans 492 residues: MNTQHSKTDVILIGGGIMSATLGTLLKELTPEKDIQLFERLSQPGEESSNVWNNAGTGHSALCELNYTKEGKDGSVDITKAIHINEQFQLSKQFWAYLIREGHIESPDKFIQSVPHMSFVKGEENVKFLKSRVASLQKNVLFEKMKISQDPEKINSWVPLMMEGRQSDEAIAITYDETGTDVNFGALTKKLIANLQQKNVGINYKHEVLDIKKLNNGNWQVVVKDLNTSNVMNYESKFVFIGAGGASLPLLQKTKIKESKHIGGFPVSGLFLRCKNPDVIHRHHAKVYGKAEVGAPPMSVPHLDTRFVNGEKSLLFGPFAGFSPKFLKNGSYLDLVKSVKPNNMITMLSAGVKEFNLTKYLVSQLMLSNEERINDLRVFLPEAKDEDWEVITAGQRVQVIKDTDKSKGQLQFGTEVITSEDGSLAALLGASPGASTAVDIMFDVLQRCYKSEFKSWEPKIKEMVPSFGLKLSEHEDMYHSINEEVKKYLNVK.

It belongs to the MQO family. Requires FAD as cofactor.

The enzyme catalyses (S)-malate + a quinone = a quinol + oxaloacetate. The protein operates within carbohydrate metabolism; tricarboxylic acid cycle; oxaloacetate from (S)-malate (quinone route): step 1/1. This chain is Probable malate:quinone oxidoreductase 1, found in Staphylococcus epidermidis (strain ATCC 12228 / FDA PCI 1200).